The primary structure comprises 453 residues: BPI fold-containing family B member 6 (453 aa).

The N-terminal stretch at 1 to 18 (MLRILCLALCSLLTGTRA) is a signal peptide. Asparagine 114 carries an N-linked (GlcNAc...) asparagine glycan. An intrachain disulfide couples cysteine 137 to cysteine 174. Asparagine 190 carries N-linked (GlcNAc...) asparagine glycosylation.

Belongs to the BPI/LBP/Plunc superfamily. BPI/LBP family. In terms of tissue distribution, detected at very low levels in normal tonsils, and at higher levels in hypertrophic tonsils.

The protein resides in the secreted. The sequence is that of BPI fold-containing family B member 6 (BPIFB6) from Homo sapiens (Human).